The primary structure comprises 282 residues: Nucleotide-binding protein XCV3122 (282 aa).

Glycine 5 to serine 12 contributes to the ATP binding site. Aspartate 57–serine 60 contacts GTP.

The protein belongs to the RapZ-like family.

Its function is as follows. Displays ATPase and GTPase activities. The polypeptide is Nucleotide-binding protein XCV3122 (Xanthomonas euvesicatoria pv. vesicatoria (strain 85-10) (Xanthomonas campestris pv. vesicatoria)).